The chain runs to 644 residues: Far upstream element-binding protein 1 (644 aa).

Disordered regions lie at residues Met-1–Phe-31 and Lys-44–Gln-94. Ala-2 bears the N-acetylalanine mark. Gly residues predominate over residues Ser-14–Val-27. 2 positions are modified to phosphoserine: Ser-52 and Ser-55. Residues Arg-65 to Lys-77 show a composition bias toward basic and acidic residues. A compositionally biased stretch (polar residues) spans Gln-81–Gln-94. KH domains lie at Val-100–Leu-164, Asn-185–Val-251, and Asn-275–Ile-339. Ser-140 is subject to Phosphoserine. Thr-153 carries the phosphothreonine modification. 4 positions are modified to omega-N-methylarginine: Arg-321, Arg-359, Arg-361, and Arg-363. Positions Val-346–Gln-365 are disordered. Positions Asn-350–Gln-365 are enriched in gly residues. Residues Leu-376–Ile-443 enclose the KH 4 domain. Thr-432 bears the Phosphothreonine mark. Disordered regions lie at residues Ile-447–Pro-532 and Gln-548–Val-580. A compositionally biased stretch (pro residues) spans Pro-468 to Tyr-505. The segment covering Pro-556–Asn-573 has biased composition (low complexity). At Ser-630 the chain carries Phosphoserine.

In terms of assembly, found in a complex with PUF60 and far upstream element (FUSE) DNA segment. Interacts with PUF60 and JTV1. In terms of processing, ubiquitinated. This targets the protein for proteasome-mediated degradation.

Its subcellular location is the nucleus. Its function is as follows. Regulates MYC expression by binding to a single-stranded far-upstream element (FUSE) upstream of the MYC promoter. May act both as activator and repressor of transcription. This Homo sapiens (Human) protein is Far upstream element-binding protein 1 (FUBP1).